Here is a 321-residue protein sequence, read N- to C-terminus: MRTVKVFEEAWPLHTPFVIARGSRSEARVVVVELEEEGIKGTGECTPYPRYGESDASVMAQIMSVVPQLEKGLTREELQKILPAGAARNALDCALWDLAARRQQQSLADLIGITLPETVITAQTVVIGTPDQMANSASTLWQAGAKLLKVKLDNHLISERMVAIRTAVPDATLIVDANESWRAEGLAARCQLLADLGVAMLEQPLPAQDDAALENFIHPLPICADESCHTRSNLKALKGRYEMVNIKLDKTGGLTEALALATEARAQGFSLMLGCMLCTSRAISAALPLVPQVSFADLDGPTWLAVDVEPALQFTTGELHL.

Substrate is bound by residues T124 and K149. Residue K151 is the Proton acceptor; specific for (R)-substrate epimerization of the active site. Residues D176, E202, and D225 each coordinate Mg(2+). Residue K247 is the Proton acceptor; specific for (S)-substrate epimerization of the active site. Substrate-binding residues include C275, D297, and D299.

This sequence belongs to the mandelate racemase/muconate lactonizing enzyme family. Monomer. Mg(2+) is required as a cofactor.

The enzyme catalyses L-alanyl-L-glutamate = L-alanyl-D-glutamate. The protein operates within cell wall biogenesis; peptidoglycan recycling. Catalyzes the epimerization of L-Ala-D-Glu to L-Ala-L-Glu and has a role in the recycling of the murein peptide, of which L-Ala-D-Glu is a component. Is also able to catalyze the reverse reaction and the epimerization of all the L-Ala-X dipeptides, except L-Ala-L-Arg, L-Ala-L-Lys and L-Ala-L-Pro. Is also active with L-Gly-L-Glu, L-Phe-L-Glu, and L-Ser-L-Glu, but not with L-Glu-L-Glu, L-Lys-L-Glu, L-Pro-L-Glu, L-Lys-L-Ala, or D-Ala-D-Ala. This is L-Ala-D/L-Glu epimerase (ycjG) from Escherichia coli (strain K12).